We begin with the raw amino-acid sequence, 80 residues long: MPFRFGTQPRRFPVEGGDSSIELESGLSSSASCNGKETSPNRQLRRCPGSHCLTITDVPITVYATMRKPPAQSSKEMRPK.

Positions 1–45 (MPFRFGTQPRRFPVEGGDSSIELESGLSSSASCNGKETSPNRQLR) are disordered. The segment covering 15 to 32 (EGGDSSIELESGLSSSAS) has biased composition (low complexity). Polar residues predominate over residues 33-42 (CNGKETSPNR).

This sequence belongs to the FAM229 family.

In Rattus norvegicus (Rat), this protein is Protein FAM229B (Fam229b).